Reading from the N-terminus, the 394-residue chain is MSKVDRWLLPEGISELLPDDALQVETLRRRLVDVFQRWGYEYVITPMIEFTDSLLTGSGGDIDLLTFKLTDQLTGKTLGIRADITPQAARMDAHSLKRSGANRLCYAGHVVHTRPQVALGSRTPIQVGVELFGEPGLDADIEVISLLLEVLSLVGMPKQYLDIGHVGVFRALTEAAGFSKEQENTLFLLLQAKAATEIKDWVTTHVREPKLQHWFLELPKLSGSAGVLDRARDVFADAPAEVMVALDELSSIADVVQPRYPDAQLYFDLSELRGYHYHTGIVFGAFSPGVGNAIAKGGRYDHIGEAFGRARPATGFAADLSVICRTLNVETAPPNPGVFAPASTNAAQWQEIQSLREAGERVVSGLSIQDAPYDHQNCDRILIETDTGFQVKAL.

The protein belongs to the class-II aminoacyl-tRNA synthetase family. HisZ subfamily. In terms of assembly, heteromultimer composed of HisG and HisZ subunits.

The protein localises to the cytoplasm. It participates in amino-acid biosynthesis; L-histidine biosynthesis; L-histidine from 5-phospho-alpha-D-ribose 1-diphosphate: step 1/9. In terms of biological role, required for the first step of histidine biosynthesis. May allow the feedback regulation of ATP phosphoribosyltransferase activity by histidine. The chain is ATP phosphoribosyltransferase regulatory subunit from Teredinibacter turnerae (strain ATCC 39867 / T7901).